A 574-amino-acid chain; its full sequence is Squalene monooxygenase (574 aa).

Residues 1–20 (MWTFLGIATFTYFYKKFGDF) lie on the Cytoplasmic side of the membrane. The interaction with MARCHF6 stretch occupies residues 1 to 100 (MWTFLGIATF…EQLEARRRRK (100 aa)). An intramembrane segment occupies 21 to 41 (ITLANREVLLCVLVFLSLGLV). The Cytoplasmic segment spans residues 42–574 (LSYRCRHRNG…IYSEMKYMVH (533 aa)). Residues 62-73 (QFALFSDILSGL) are required for degradation in response to high membrane cholesterol levels. The segment at 118–574 (TSSQNDPEVI…IYSEMKYMVH (457 aa)) is sufficient for enzyme activity. FAD is bound by residues 133-134 (VL), 153-154 (ER), arginine 161, phenylalanine 166, arginine 234, valine 250, aspartate 408, and methionine 421. Residues 516–574 (PLVLIGHFFAVAIYAVYFCFKSEPWITKPRALLSSGAVLYKACSVIFPLIYSEMKYMVH) are hydrophobic; mediates interaction with membranes.

Belongs to the squalene monooxygenase family. In terms of assembly, interacts (via N-terminal domain) with MARCHF6. Interacts with SMIM22; this interaction modulates lipid droplet formation. It depends on FAD as a cofactor. Ubiquitinated by MARCHF6 in response to high cholesterol levels in intracellular membranes, leading to proteasomal degradation. In terms of tissue distribution, detected in liver (at protein level).

It is found in the microsome membrane. Its subcellular location is the endoplasmic reticulum membrane. It carries out the reaction squalene + reduced [NADPH--hemoprotein reductase] + O2 = (S)-2,3-epoxysqualene + oxidized [NADPH--hemoprotein reductase] + H2O + H(+). It functions in the pathway terpene metabolism; lanosterol biosynthesis; lanosterol from farnesyl diphosphate: step 2/3. With respect to regulation, inhibited by NB-598 ((E)N-ethyl-N-(6,6-dimethyl-2-hepten-4-ynyl)-3-[(3,3'-bi-thiophen-5-yl)methoxy]benzene-methanamine). Contrary to fungal enzymes, the mammalian enzyme is only slightly inhibited by terbinafine. Inhibited by tellurite, tellurium dioxide, selenite, and selenium dioxide. In terms of biological role, catalyzes the stereospecific oxidation of squalene to (S)-2,3-epoxysqualene, and is considered to be a rate-limiting enzyme in steroid biosynthesis. The protein is Squalene monooxygenase (SQLE) of Homo sapiens (Human).